An 86-amino-acid chain; its full sequence is YcgL domain-containing protein IL1825 (86 aa).

Residues 1–85 (MLCDVYRSSK…KREELQVNVN (85 aa)) form the YcgL domain.

In Idiomarina loihiensis (strain ATCC BAA-735 / DSM 15497 / L2-TR), this protein is YcgL domain-containing protein IL1825.